The primary structure comprises 607 residues: Elongation factor 4 (607 aa).

A tr-type G domain is found at 11–193 (SKIRNFSIIA…QIVEKVPAPT (183 aa)). GTP is bound by residues 23–28 (DHGKST) and 140–143 (NKID).

The protein belongs to the TRAFAC class translation factor GTPase superfamily. Classic translation factor GTPase family. LepA subfamily.

The protein resides in the cell membrane. The catalysed reaction is GTP + H2O = GDP + phosphate + H(+). In terms of biological role, required for accurate and efficient protein synthesis under certain stress conditions. May act as a fidelity factor of the translation reaction, by catalyzing a one-codon backward translocation of tRNAs on improperly translocated ribosomes. Back-translocation proceeds from a post-translocation (POST) complex to a pre-translocation (PRE) complex, thus giving elongation factor G a second chance to translocate the tRNAs correctly. Binds to ribosomes in a GTP-dependent manner. The sequence is that of Elongation factor 4 from Bacillus cereus (strain Q1).